A 179-amino-acid chain; its full sequence is Inner membrane-spanning protein YciB (179 aa).

5 helical membrane passes run 22 to 42 (IYAA…YSWV), 50 to 70 (MALI…FFHN), 76 to 96 (WKVT…QWVM), 121 to 141 (LAWA…AFWL), and 149 to 169 (FKVF…GIYI).

It belongs to the YciB family.

The protein resides in the cell inner membrane. Its function is as follows. Plays a role in cell envelope biogenesis, maintenance of cell envelope integrity and membrane homeostasis. The polypeptide is Inner membrane-spanning protein YciB (Escherichia coli O127:H6 (strain E2348/69 / EPEC)).